Here is a 734-residue protein sequence, read N- to C-terminus: Serine protease FAM111B (734 aa).

Residue Met1 is modified to N-acetylmethionine. Composition is skewed to basic and acidic residues over residues 1 to 10 (MNSMKTEENK) and 17 to 32 (DDQR…TVMK). Residues 1-32 (MNSMKTEENKSFSAMEDDQRTRPEVSKDTVMK) are disordered. Lys284 is covalently cross-linked (Glycyl lysine isopeptide (Lys-Gly) (interchain with G-Cter in SUMO2)). A disordered region spans residues 285 to 321 (QNESATDEINHQSLIQSKKKVHKPKKDGETKDVEHSR). Over residues 310–321 (KDGETKDVEHSR) the composition is skewed to basic and acidic residues. Active-site charge relay system residues include His490, Asp544, and Ser650. The interval 712-734 (TYDEEKGKQESSLQDHQIEPMEC) is disordered.

The protein belongs to the FAM111 family. In terms of tissue distribution, widely expressed.

Functionally, serine protease. In Homo sapiens (Human), this protein is Serine protease FAM111B.